The primary structure comprises 691 residues: Probable E3 ubiquitin-protein ligase RHG1A (691 aa).

Disordered stretches follow at residues 71-91, 151-235, 316-336, 349-373, and 395-501; these read SLGE…NEQR, GPGT…PRGM, SFVV…GSRT, VGGT…SRSI, and QSSR…MHNR. The segment covering 80–91 has biased composition (basic and acidic residues); sequence TKDEASSHNEQR. Polar residues-rich tracts occupy residues 204-213 and 317-328; these read GESSSWTPGS and FVVSRNPNSTPV. Over residues 361–370 the composition is skewed to basic and acidic residues; that stretch reads RNLHLDETRS. Over residues 395-406 the composition is skewed to polar residues; sequence QSSRNVTNGNLN. Residues 407–419 are compositionally biased toward low complexity; sequence SASSVSRTGSTTS. Over residues 429–440 the composition is skewed to polar residues; the sequence is NLAWTSYQNSPH. Residues 454–465 are compositionally biased toward low complexity; that stretch reads RSLLSSLAADAT. Residues 637–678 form an RING-type; atypical zinc finger; sequence CCVCQEEYTEGEDMGTLECGHEFHSQCIKEWLKQKNLCPICK.

As to expression, expressed in stems, flowers, green siliques, cauline leaves, seeds and roots.

The catalysed reaction is S-ubiquitinyl-[E2 ubiquitin-conjugating enzyme]-L-cysteine + [acceptor protein]-L-lysine = [E2 ubiquitin-conjugating enzyme]-L-cysteine + N(6)-ubiquitinyl-[acceptor protein]-L-lysine.. The protein operates within protein modification; protein ubiquitination. Probable E3 ubiquitin-protein ligase that may possess E3 ubiquitin ligase activity in vitro. In Arabidopsis thaliana (Mouse-ear cress), this protein is Probable E3 ubiquitin-protein ligase RHG1A.